The sequence spans 75 residues: Penaeidin-3l (75 aa).

The N-terminal stretch at 1–19 (MRLVVCLVFLASFALVCQG) is a signal peptide. Gln-20 carries the post-translational modification Pyrrolidone carboxylic acid. 3 disulfides stabilise this stretch: Cys-44–Cys-59, Cys-48–Cys-66, and Cys-60–Cys-67. Residue Ser-74 is modified to Serine amide.

It belongs to the penaeidin family.

It localises to the cytoplasmic granule. In terms of biological role, antibacterial and antifungal activity. Presents chitin-binding activity. The sequence is that of Penaeidin-3l from Penaeus setiferus (Atlantic white shrimp).